A 307-amino-acid polypeptide reads, in one-letter code: Pantothenate kinase (307 aa).

ATP is bound at residue 90-97 (GSVAVGKS).

It belongs to the prokaryotic pantothenate kinase family.

The protein resides in the cytoplasm. It catalyses the reaction (R)-pantothenate + ATP = (R)-4'-phosphopantothenate + ADP + H(+). The protein operates within cofactor biosynthesis; coenzyme A biosynthesis; CoA from (R)-pantothenate: step 1/5. The protein is Pantothenate kinase of Limosilactobacillus reuteri subsp. reuteri (strain JCM 1112) (Lactobacillus reuteri).